The primary structure comprises 217 residues: Methylthioribulose-1-phosphate dehydratase (217 aa).

Residues H106 and H108 each contribute to the Zn(2+) site.

Belongs to the aldolase class II family. MtnB subfamily. The cofactor is Zn(2+).

The enzyme catalyses 5-(methylsulfanyl)-D-ribulose 1-phosphate = 5-methylsulfanyl-2,3-dioxopentyl phosphate + H2O. The protein operates within amino-acid biosynthesis; L-methionine biosynthesis via salvage pathway; L-methionine from S-methyl-5-thio-alpha-D-ribose 1-phosphate: step 2/6. Catalyzes the dehydration of methylthioribulose-1-phosphate (MTRu-1-P) into 2,3-diketo-5-methylthiopentyl-1-phosphate (DK-MTP-1-P). The protein is Methylthioribulose-1-phosphate dehydratase of Xanthomonas euvesicatoria pv. vesicatoria (strain 85-10) (Xanthomonas campestris pv. vesicatoria).